Here is a 271-residue protein sequence, read N- to C-terminus: Bifunctional protein FolD (271 aa).

Residues 154–156 (GRS), S181, and I222 contribute to the NADP(+) site.

It belongs to the tetrahydrofolate dehydrogenase/cyclohydrolase family. Homodimer.

The enzyme catalyses (6R)-5,10-methylene-5,6,7,8-tetrahydrofolate + NADP(+) = (6R)-5,10-methenyltetrahydrofolate + NADPH. It carries out the reaction (6R)-5,10-methenyltetrahydrofolate + H2O = (6R)-10-formyltetrahydrofolate + H(+). The protein operates within one-carbon metabolism; tetrahydrofolate interconversion. In terms of biological role, catalyzes the oxidation of 5,10-methylenetetrahydrofolate to 5,10-methenyltetrahydrofolate and then the hydrolysis of 5,10-methenyltetrahydrofolate to 10-formyltetrahydrofolate. The protein is Bifunctional protein FolD of Thermotoga petrophila (strain ATCC BAA-488 / DSM 13995 / JCM 10881 / RKU-1).